Here is a 146-residue protein sequence, read N- to C-terminus: DNA protection during starvation protein 2 (146 aa).

Fe cation contacts are provided by His27, Asp54, and Glu58.

Belongs to the Dps family. As to quaternary structure, the 12 subunits form a hollow sphere into which the mineral iron core of up to 500 Fe(3+) can be deposited. Homododecamer.

The protein resides in the cytoplasm. It catalyses the reaction 2 Fe(2+) + H2O2 + 2 H(+) = 2 Fe(3+) + 2 H2O. In terms of biological role, protects DNA from oxidative damage by sequestering intracellular Fe(2+) ion and storing it in the form of Fe(3+) oxyhydroxide mineral. One hydrogen peroxide oxidizes two Fe(2+) ions, which prevents hydroxyl radical production by the Fenton reaction. It is capable of binding and sequestering Fe(2+) ion. Does not bind DNA. This chain is DNA protection during starvation protein 2 (dps2), found in Bacillus anthracis.